The chain runs to 122 residues: Large ribosomal subunit protein uL14 (122 aa).

It belongs to the universal ribosomal protein uL14 family. Part of the 50S ribosomal subunit. Forms a cluster with proteins L3 and L19. In the 70S ribosome, L14 and L19 interact and together make contacts with the 16S rRNA in bridges B5 and B8.

Functionally, binds to 23S rRNA. Forms part of two intersubunit bridges in the 70S ribosome. The polypeptide is Large ribosomal subunit protein uL14 (Pseudomonas savastanoi pv. phaseolicola (strain 1448A / Race 6) (Pseudomonas syringae pv. phaseolicola (strain 1448A / Race 6))).